We begin with the raw amino-acid sequence, 590 residues long: Oleate hydratase (590 aa).

FAD contacts are provided by Ala33, Glu56, Ser64, and Glu82. Catalysis depends on Glu82, which acts as the Proton acceptor. The active-site Proton donor is Tyr200. FAD contacts are provided by Val249, Ser291, Thr508, and Ser512.

Belongs to the oleate hydratase family. Monomer and homodimer. Both forms seem to be active. It depends on FAD as a cofactor.

It catalyses the reaction (R)-10-hydroxyoctadecanoate = (9Z)-octadecenoate + H2O. The enzyme catalyses (9Z)-octadecenoate + H2O = 10-hydroxyoctadecanoate. The catalysed reaction is (9Z)-hexadecenoate + H2O = 10-hydroxyhexadecanoate. It carries out the reaction (9Z,12Z)-octadecadienoate + H2O = (12Z)-10-hydroxyoctadecenoate. It catalyses the reaction (12Z)-10-hydroxyoctadecenoate + H2O = 10,13-dihydroxyoctadecanoate. The enzyme catalyses (9Z,12Z,15Z)-octadecatrienoate + H2O = (12Z,15Z)-10-hydroxyoctadecadienoate. It functions in the pathway lipid metabolism; fatty acid metabolism. Its function is as follows. Catalyzes the hydration of oleate at its cis-9-double bond to yield 10-hydroxyoctadecanoate, probably in the (R) configuration, and of linoleate at its cis-9- and cis-12-double bond to yield 10-hydroxy-12-octadecenoate and 10,13-dihydroxyoctadecanoate. Is not active on trans-double bonds and esterified fatty acids as substrate; is only active on cis-9- and/or cis-12-double bond of C16 and C18 fatty acids without any trans-configurations, producing 10-hydroxy and 10,13-dihydroxy derivatives. Appears to play a role in oleic acid detoxification and bacterial virulence. The sequence is that of Oleate hydratase (sph) from Streptococcus pyogenes serotype M49 (strain NZ131).